Here is a 210-residue protein sequence, read N- to C-terminus: MDLSVTHMDDLKTVMEDWKNELLVYKFALDALDTKFSIISQEYNLIHGHNPIEHTKSRVKSFESIVNKLMRKGCEITTKEMKEHIHDIAGVRIICSFISDIYNVVNVLKQHEDLRIVKVKDYIQTPKPNGYRSLHLIIEMPVNLTNRVEYVKAEIQIRTIAMDFWASLEHKIYYKLNNDVPKQLTDELKEAAEIAHYLDEKMLGIKKEVD.

This sequence belongs to the RelA/SpoT family. In terms of assembly, homotetramer.

The catalysed reaction is GTP + ATP = guanosine 3'-diphosphate 5'-triphosphate + AMP. The protein operates within purine metabolism; ppGpp biosynthesis; ppGpp from GTP: step 1/2. In terms of biological role, functions as a (p)ppGpp synthase; GDP can be used instead of GTP, resulting in an increase of (p)ppGpp synthesis. Overexpression in relA mutants (triple relA-yjbM-ywaC deletions and single relA deletions) leads to growth arrest; GTP levels fall drastically, various guanine-related nucleotides are synthesized (ppGp or pGpp), the cellular transcriptional profile changes dramatically and 70S ribosome dimerization occurs. Overexpression in the presence of a wild-type relA gene does not have these effects. In eubacteria ppGpp (guanosine 3'-diphosphate 5'-diphosphate) is a mediator of the stringent response that coordinates a variety of cellular activities in response to changes in nutritional abundance. activities in response to changes in nutritional abundance. YwaC has probably a minor role in stringent response. The protein is GTP pyrophosphokinase YwaC (ywaC) of Bacillus subtilis (strain 168).